Reading from the N-terminus, the 132-residue chain is UPF0292 protein PYRAB04740 (132 aa).

The Toprim domain occupies 20 to 100 (DGAIIVEGPR…KVDTETRRSL (81 aa)). Mg(2+) contacts are provided by Glu-26, Asp-69, and Asp-71.

It belongs to the UPF0292 family. It depends on Mg(2+) as a cofactor.

In Pyrococcus abyssi (strain GE5 / Orsay), this protein is UPF0292 protein PYRAB04740.